A 309-amino-acid chain; its full sequence is Taste receptor type 2 member 46 (309 aa).

Residue Met-1 is a topological domain, extracellular. Residues 2-22 (ITFLPIIFSILIVVTFVIGNF) form a helical membrane-spanning segment. Residues 23–46 (ANGFIALVNSIEWFKRQKISFADQ) lie on the Cytoplasmic side of the membrane. The helical transmembrane segment at 47–67 (ILTALAVSRVGLLWVLVLNWY) threads the bilayer. Over 68–86 (ATELNPAFNSIEVRITAYN) the chain is Extracellular. The helical transmembrane segment at 87-107 (VWAVINHFSNWLATSLSIFYL) threads the bilayer. At 108–126 (LKIANFSNLIFLHLKRRVK) the chain is on the cytoplasmic side. A helical membrane pass occupies residues 127-147 (SVVLVILLGPLLFLVCHLFVI). At 148–178 (NMNQIIWTKEYEGNMTWKIKLRSAMYLSNTT) the chain is on the extracellular side. 2 N-linked (GlcNAc...) asparagine glycosylation sites follow: Asn-161 and Asn-176. The helical transmembrane segment at 179–199 (VTILANLVPFTLTLISFLLLI) threads the bilayer. The Cytoplasmic portion of the chain corresponds to 200–229 (CSLCKHLKKMQLHGKGSQDPSMKVHIKALQ). The chain crosses the membrane as a helical span at residues 230 to 250 (TVTSFLLLCAIYFLSIIMSVW). Residues 251–259 (SFESLENKP) are Extracellular-facing. A helical membrane pass occupies residues 260–280 (VFMFCEAIAFSYPSTHPFILI). At 281–309 (WGNKKLKQTFLSVLWHVRYWVKGEKPSSS) the chain is on the cytoplasmic side.

Belongs to the G-protein coupled receptor T2R family. As to expression, expressed in subsets of taste receptor cells of the tongue and exclusively in gustducin-positive cells. Expressed on ciliated airway epithelium.

Its subcellular location is the membrane. It localises to the cell projection. The protein localises to the cilium membrane. Receptor that may play a role in the perception of bitterness and is gustducin-linked. May play a role in sensing the chemical composition of the gastrointestinal content. The activity of this receptor may stimulate alpha gustducin, mediate PLC-beta-2 activation and lead to the gating of TRPM5. In airway epithelial cells, binding of bitter compounds increases the intracellular calcium ion concentration and stimulates ciliary beat frequency. The polypeptide is Taste receptor type 2 member 46 (TAS2R46) (Homo sapiens (Human)).